The following is an 860-amino-acid chain: Paladin (860 aa).

A disordered region spans residues 1-24 (MGTTASAAPQATLHERLHSDSMTD). The N-myristoyl glycine moiety is linked to residue Gly-2. Over residues 13–24 (LHERLHSDSMTD) the composition is skewed to basic and acidic residues.

The protein belongs to the paladin family.

It localises to the cytoplasm. The protein resides in the cytosol. The chain is Paladin (pald1) from Danio rerio (Zebrafish).